The sequence spans 254 residues: Pyruvate dehydrogenase complex repressor (254 aa).

In terms of domain architecture, HTH gntR-type spans 9–77 (PKLSDVIEQQ…QGGGTFVQSS (69 aa)). Residues 37-56 (ERELAKQFDVSRPSLREAIQ) constitute a DNA-binding region (H-T-H motif).

Functionally, transcriptional repressor for the pyruvate dehydrogenase complex genes aceEF and lpd. This is Pyruvate dehydrogenase complex repressor (pdhR) from Escherichia coli O6:H1 (strain CFT073 / ATCC 700928 / UPEC).